The primary structure comprises 277 residues: Indole-3-glycerol phosphate synthase (277 aa).

This sequence belongs to the TrpC family.

It catalyses the reaction 1-(2-carboxyphenylamino)-1-deoxy-D-ribulose 5-phosphate + H(+) = (1S,2R)-1-C-(indol-3-yl)glycerol 3-phosphate + CO2 + H2O. It functions in the pathway amino-acid biosynthesis; L-tryptophan biosynthesis; L-tryptophan from chorismate: step 4/5. In Pseudomonas putida (strain W619), this protein is Indole-3-glycerol phosphate synthase.